Here is a 994-residue protein sequence, read N- to C-terminus: UPF0182 protein Strop_3729 (994 aa).

7 consecutive transmembrane segments (helical) span residues 18–38 (IGVL…VQAW), 61–81 (LLLF…NLWL), 110–130 (IGLW…LSAQ), 174–194 (FTAV…FGGI), 209–229 (AHLS…YVLD), 260–280 (ILAY…NAWM), and 283–303 (LVWP…IGGI). Disordered regions lie at residues 891–934 (GEQA…AEAA) and 970–994 (FEQA…SPGG). Residues 897-926 (PSPPPSDDETPPSPTPTPTPTTPSVTPPPL) show a composition bias toward pro residues.

This sequence belongs to the UPF0182 family.

The protein resides in the cell membrane. In Salinispora tropica (strain ATCC BAA-916 / DSM 44818 / JCM 13857 / NBRC 105044 / CNB-440), this protein is UPF0182 protein Strop_3729.